The sequence spans 212 residues: Methylthioribulose-1-phosphate dehydratase (212 aa).

His-97 and His-99 together coordinate Zn(2+).

This sequence belongs to the aldolase class II family. MtnB subfamily. As to quaternary structure, homotetramer. Zn(2+) serves as cofactor.

The enzyme catalyses 5-(methylsulfanyl)-D-ribulose 1-phosphate = 5-methylsulfanyl-2,3-dioxopentyl phosphate + H2O. Its pathway is amino-acid biosynthesis; L-methionine biosynthesis via salvage pathway; L-methionine from S-methyl-5-thio-alpha-D-ribose 1-phosphate: step 2/6. Its function is as follows. Catalyzes the dehydration of methylthioribulose-1-phosphate (MTRu-1-P) into 2,3-diketo-5-methylthiopentyl-1-phosphate (DK-MTP-1-P). In Bacillus mycoides (strain KBAB4) (Bacillus weihenstephanensis), this protein is Methylthioribulose-1-phosphate dehydratase.